The following is a 250-amino-acid chain: MAQLKLEDLLKSGAHFGHLTRRWCPKMKPYIFMEKNGIHIIDLKKTVSLADDALNAVGAIASTGKEILFVGTKKQAKAIVAEQAERAGMPYVAERWLGGMLTNFSTIRQSIRRLNSIERMEIDGTFDMITKKERLMLMREKEKLVRVLGGISKMTRLPAAIFLIDVKKEHIAVREAYSLGIPIFAIVDTNCDPEFIDYVIPANDDAIRSIELITSSVADAIIDATAVQKDDEDAAATNLASEAQDEKSEA.

The protein belongs to the universal ribosomal protein uS2 family.

This is Small ribosomal subunit protein uS2 from Chloroherpeton thalassium (strain ATCC 35110 / GB-78).